The following is a 146-amino-acid chain: MKVYVDADACPVKDIIIKESGKQNIAVTLVTSLSHYSLHEHPSHVETIYVDTGADAADYRIMQLANKGDIIVTQDYGLASLALAKGCYVLHHKGFAYTNHNIDQLLQSRYLSAKERKSGKRTKGPKALTEEDRINFNQLFLQYITK.

It belongs to the UPF0178 family.

The polypeptide is UPF0178 protein OB0454 (Oceanobacillus iheyensis (strain DSM 14371 / CIP 107618 / JCM 11309 / KCTC 3954 / HTE831)).